Consider the following 104-residue polypeptide: Large ribosomal subunit protein bL21 (104 aa).

Belongs to the bacterial ribosomal protein bL21 family. In terms of assembly, part of the 50S ribosomal subunit. Contacts protein L20.

This protein binds to 23S rRNA in the presence of protein L20. The protein is Large ribosomal subunit protein bL21 of Pseudomonas putida (strain W619).